We begin with the raw amino-acid sequence, 110 residues long: Putative UPF0377 protein YIR040C (110 aa).

It belongs to the UPF0377 family.

The polypeptide is Putative UPF0377 protein YIR040C (Saccharomyces cerevisiae (strain ATCC 204508 / S288c) (Baker's yeast)).